A 427-amino-acid chain; its full sequence is Trigger factor (427 aa).

Residues 163-248 enclose the PPIase FKBP-type domain; the sequence is GNIAIIDFKG…VKGIKVKELP (86 aa).

It belongs to the FKBP-type PPIase family. Tig subfamily.

It localises to the cytoplasm. It catalyses the reaction [protein]-peptidylproline (omega=180) = [protein]-peptidylproline (omega=0). Its function is as follows. Involved in protein export. Acts as a chaperone by maintaining the newly synthesized protein in an open conformation. Functions as a peptidyl-prolyl cis-trans isomerase. This chain is Trigger factor, found in Clostridium botulinum (strain Alaska E43 / Type E3).